The sequence spans 154 residues: C-type lectin 16 (154 aa).

The N-terminal stretch at 1-20 (MALSLYLIAVICSLVGFTAS) is a signal peptide. The C-type lectin domain maps to 27–152 (DNRFCFPNVV…CASMRRFVCE (126 aa)). Intrachain disulfides connect Cys-46-Cys-151 and Cys-123-Cys-143.

In terms of assembly, (Microbial infection) Interacts with non-structural protein 1 of dengue virus type 2. Interacts with envelope protein E of dengue virus type 2. As to expression, female salivary gland (at protein level). Not detected in female carcass without salivary glands (at protein level). Not detected in male tissues (at protein level).

Its subcellular location is the secreted. Its function is as follows. Putative lectin. May have a regulatory role in mosquito immunity. Probably suppresses replication of dengue virus type 2 in mosquito salivary glands. The protein is C-type lectin 16 of Aedes aegypti (Yellowfever mosquito).